The sequence spans 151 residues: MRSSTILIVLGIAILAVNGVATALTRDGIEMGTQEKSRLLRSTSTEHETDEERKFRFKLPSFRFKRRVKVPKVAKPKKKNPVMANRARKYHDVLHSDRGYDVYDMMRSDKLTLQELIEFLTTYGQIDKNGIKILTDGLRSYNIPKAYPVAK.

Positions 1-19 (MRSSTILIVLGIAILAVNG) are cleaved as a signal peptide. The RxLR-dEER signature appears at 38–53 (RLLRSTSTEHETDEER).

It belongs to the RxLR effector family.

The protein localises to the secreted. It is found in the host nucleus. In terms of biological role, effector that acts as a broad suppressor of cell death to interrupt plant immunity. Inhibits cell death induced by cell death-inducing proteins, including the PAMP elicitor INF1 from P.infestans. The chain is Secreted RxLR effector protein 30 from Plasmopara viticola (Downy mildew of grapevine).